Reading from the N-terminus, the 511-residue chain is ATP synthase subunit beta, mitochondrial (511 aa).

A mitochondrion-targeting transit peptide spans 1–33 (MVLPRLYTATSRAAFKAAKQSAPLLSTSWKRCM). The residue at position 112 (Thr-112) is a Phosphothreonine. Residue 190–197 (GGAGVGKT) coordinates ATP. Thr-237 bears the Phosphothreonine mark. Ser-373 is subject to Phosphoserine.

The protein belongs to the ATPase alpha/beta chains family. F-type ATPases have 2 components, CF(1) - the catalytic core - and CF(0) - the membrane proton channel. CF(1) has five subunits: alpha(3), beta(3), gamma(1), delta(1), epsilon(1). CF(0) has three main subunits: a, b and c.

Its subcellular location is the mitochondrion. The protein resides in the mitochondrion inner membrane. The catalysed reaction is ATP + H2O + 4 H(+)(in) = ADP + phosphate + 5 H(+)(out). Mitochondrial membrane ATP synthase (F(1)F(0) ATP synthase or Complex V) produces ATP from ADP in the presence of a proton gradient across the membrane which is generated by electron transport complexes of the respiratory chain. F-type ATPases consist of two structural domains, F(1) - containing the extramembraneous catalytic core, and F(0) - containing the membrane proton channel, linked together by a central stalk and a peripheral stalk. During catalysis, ATP synthesis in the catalytic domain of F(1) is coupled via a rotary mechanism of the central stalk subunits to proton translocation. Subunits alpha and beta form the catalytic core in F(1). Rotation of the central stalk against the surrounding alpha(3)beta(3) subunits leads to hydrolysis of ATP in three separate catalytic sites on the beta subunits. This is ATP synthase subunit beta, mitochondrial (ATP2) from Saccharomyces cerevisiae (strain ATCC 204508 / S288c) (Baker's yeast).